Reading from the N-terminus, the 916-residue chain is Cadherin-4 (916 aa).

Positions 1 to 20 (MTAGAGVLLLLLSLSGALRA) are cleaved as a signal peptide. The propeptide occupies 21–169 (HNEDLTTRET…NANGLRRRKR (149 aa)). Residues 124–168 (TSSPHSGHKPQKGKKVVALDPSPPPKDTLLPWPQHQNANGLRRRK) form a disordered region. A compositionally biased stretch (basic residues) spans 129 to 138 (SGHKPQKGKK). Cadherin domains follow at residues 170–277 (DWVI…RPEF), 278–392 (INQV…PPEF), 393–507 (TAST…APYF), 508–613 (PSNH…DNAP), and 614–724 (ELLP…TIGA). Residues 170 to 734 (DWVIPPINVP…VAAAGLGTGA (565 aa)) lie on the Extracellular side of the membrane. Asparagine 283, asparagine 412, asparagine 557, asparagine 632, asparagine 661, and asparagine 702 each carry an N-linked (GlcNAc...) asparagine glycan. A helical transmembrane segment spans residues 735–756 (IVAILICILILLTMVLLFVMWM). Residues 757–916 (KRREKERHTK…ADMYGGGEED (160 aa)) lie on the Cytoplasmic side of the membrane. Residues 806 to 838 (MGHVPSKAPGVRRVDERPVGAEPQYPIRPMVPH) form a disordered region.

In terms of tissue distribution, expressed mainly in brain but also found in other tissues.

It is found in the cell membrane. Its function is as follows. Cadherins are calcium-dependent cell adhesion proteins. They preferentially interact with themselves in a homophilic manner in connecting cells; cadherins may thus contribute to the sorting of heterogeneous cell types. May play an important role in retinal development. This is Cadherin-4 (CDH4) from Homo sapiens (Human).